Here is a 304-residue protein sequence, read N- to C-terminus: UDP-3-O-acyl-N-acetylglucosamine deacetylase (304 aa).

3 residues coordinate Zn(2+): H78, H237, and D241. The Proton donor role is filled by H264.

Belongs to the LpxC family. It depends on Zn(2+) as a cofactor.

It carries out the reaction a UDP-3-O-[(3R)-3-hydroxyacyl]-N-acetyl-alpha-D-glucosamine + H2O = a UDP-3-O-[(3R)-3-hydroxyacyl]-alpha-D-glucosamine + acetate. It functions in the pathway glycolipid biosynthesis; lipid IV(A) biosynthesis; lipid IV(A) from (3R)-3-hydroxytetradecanoyl-[acyl-carrier-protein] and UDP-N-acetyl-alpha-D-glucosamine: step 2/6. In terms of biological role, catalyzes the hydrolysis of UDP-3-O-myristoyl-N-acetylglucosamine to form UDP-3-O-myristoylglucosamine and acetate, the committed step in lipid A biosynthesis. In Xylella fastidiosa (strain 9a5c), this protein is UDP-3-O-acyl-N-acetylglucosamine deacetylase.